The chain runs to 428 residues: Trigger factor (428 aa).

Residues 166–250 (GDIVTFDFKG…IKNIKEKILP (85 aa)) enclose the PPIase FKBP-type domain.

Belongs to the FKBP-type PPIase family. Tig subfamily.

Its subcellular location is the cytoplasm. It carries out the reaction [protein]-peptidylproline (omega=180) = [protein]-peptidylproline (omega=0). Its function is as follows. Involved in protein export. Acts as a chaperone by maintaining the newly synthesized protein in an open conformation. Functions as a peptidyl-prolyl cis-trans isomerase. In Mycoplasma mycoides subsp. mycoides SC (strain CCUG 32753 / NCTC 10114 / PG1), this protein is Trigger factor.